The following is a 353-amino-acid chain: Photosystem II D2 protein (353 aa).

Residue threonine 2 is modified to N-acetylthreonine. At threonine 2 the chain carries Phosphothreonine. Residues cysteine 41–threonine 61 form a helical membrane-spanning segment. Histidine 118 contributes to the chlorophyll a binding site. A helical membrane pass occupies residues glycine 125–proline 141. Pheophytin a contacts are provided by glutamine 130 and asparagine 143. The helical transmembrane segment at valine 153–serine 166 threads the bilayer. Residue histidine 198 coordinates chlorophyll a. The helical transmembrane segment at alanine 208 to aspartate 228 threads the bilayer. Histidine 215 and phenylalanine 262 together coordinate a plastoquinone. Histidine 215 lines the Fe cation pocket. Histidine 269 contributes to the Fe cation binding site. A helical membrane pass occupies residues glycine 279 to arginine 295.

This sequence belongs to the reaction center PufL/M/PsbA/D family. As to quaternary structure, PSII is composed of 1 copy each of membrane proteins PsbA, PsbB, PsbC, PsbD, PsbE, PsbF, PsbH, PsbI, PsbJ, PsbK, PsbL, PsbM, PsbT, PsbX, PsbY, PsbZ, Psb30/Ycf12, at least 3 peripheral proteins of the oxygen-evolving complex and a large number of cofactors. It forms dimeric complexes. The D1/D2 heterodimer binds P680, chlorophylls that are the primary electron donor of PSII, and subsequent electron acceptors. It shares a non-heme iron and each subunit binds pheophytin, quinone, additional chlorophylls, carotenoids and lipids. There is also a Cl(-1) ion associated with D1 and D2, which is required for oxygen evolution. The PSII complex binds additional chlorophylls, carotenoids and specific lipids. is required as a cofactor.

It localises to the plastid. The protein localises to the chloroplast thylakoid membrane. It carries out the reaction 2 a plastoquinone + 4 hnu + 2 H2O = 2 a plastoquinol + O2. Its function is as follows. Photosystem II (PSII) is a light-driven water:plastoquinone oxidoreductase that uses light energy to abstract electrons from H(2)O, generating O(2) and a proton gradient subsequently used for ATP formation. It consists of a core antenna complex that captures photons, and an electron transfer chain that converts photonic excitation into a charge separation. The D1/D2 (PsbA/PsbD) reaction center heterodimer binds P680, the primary electron donor of PSII as well as several subsequent electron acceptors. D2 is needed for assembly of a stable PSII complex. The protein is Photosystem II D2 protein of Zygnema circumcarinatum (Green alga).